The following is a 442-amino-acid chain: 3-phosphoshikimate 1-carboxyvinyltransferase (442 aa).

Positions 27, 28, and 32 each coordinate 3-phosphoshikimate. Lys27 contacts phosphoenolpyruvate. Positions 100 and 128 each coordinate phosphoenolpyruvate. Residues Ser174, Ser175, Gln176, Ser204, Asp321, and Lys348 each contribute to the 3-phosphoshikimate site. A phosphoenolpyruvate-binding site is contributed by Gln176. The Proton acceptor role is filled by Asp321. Phosphoenolpyruvate is bound by residues Arg352, Arg394, and Lys424.

This sequence belongs to the EPSP synthase family. As to quaternary structure, monomer.

The protein localises to the cytoplasm. It carries out the reaction 3-phosphoshikimate + phosphoenolpyruvate = 5-O-(1-carboxyvinyl)-3-phosphoshikimate + phosphate. Its pathway is metabolic intermediate biosynthesis; chorismate biosynthesis; chorismate from D-erythrose 4-phosphate and phosphoenolpyruvate: step 6/7. Its function is as follows. Catalyzes the transfer of the enolpyruvyl moiety of phosphoenolpyruvate (PEP) to the 5-hydroxyl of shikimate-3-phosphate (S3P) to produce enolpyruvyl shikimate-3-phosphate and inorganic phosphate. The chain is 3-phosphoshikimate 1-carboxyvinyltransferase from Herminiimonas arsenicoxydans.